The sequence spans 289 residues: Tachykinins (289 aa).

Positions Met1–Ala24 are cleaved as a signal peptide. The disordered stretch occupies residues Ala24–Glu94. A propeptide spanning residues Ala25–Val47 is cleaved from the precursor. Position 59 is an arginine amide (Arg59). Over residues Gly60–Ser69 the composition is skewed to basic and acidic residues. Position 95 is an asparagine amide (Asn95). Arg110 carries the arginine amide modification. Residue Val153 is modified to Valine amide. An arginine amide mark is found at Arg165, Arg200, Arg239, and Arg281. Positions Pro285–Glu289 are excised as a propeptide.

This sequence belongs to the tachykinin family. In terms of tissue distribution, strong expression is seen in a group of 14 cells plus one isolated cell in the midgut of stage 17 embryos. Also expressed in a pair of medially located unidentified cells, just posterior to the brain, and in two lateral groups of cells that may be associated with tracheae. Expression in the larval gut is restricted to cells with endocrine cell-like morphology in the posterior midgut, just anterior to the malphigian tubules. In the brain, expression is detected in a restricted number of neuronal cell bodies. Expression in the adult female gut is restricted to the midgut with no expression detected in the hindgut.

The protein localises to the secreted. Functionally, tachykinins are active peptides which excite neurons, evoke behavioral responses, are potent vasodilators and secretagogues, and contract (directly or indirectly) many smooth muscles. Stimulates gut muscle contractions. Required for the response to the male sex pheromone CH503 which is transferred from males to females during mating and inhibits courtship behavior by other males. The Gr68a gustatory receptor is required for detection of the pheromone and Gr68a-expressing neurons in the male foreleg relay signals to the suboesophageal zone (SEZ) which leads to courtship suppression through release of tachykinin from a cluster of 8-10 neurons in the SEZ. In Drosophila melanogaster (Fruit fly), this protein is Tachykinins.